The following is a 649-amino-acid chain: Forkhead box protein O1 (649 aa).

2 disordered regions span residues 1-62 (MAEA…ASAS) and 112-151 (VHSA…SSRR). A Phosphothreonine; by PKB/AKT1 or PKB/AKT2 and SGK1 modification is found at T24. Low complexity predominate over residues 33-62 (NQSNSTTSSPAPSGSTAANPDATASLASAS). Residues 116-135 (PPQPPPTGPLSQPPPVPPAA) show a composition bias toward pro residues. The fork-head DNA-binding region spans 154-248 (WGNLSYADLI…KSGKSPRRRA (95 aa)). DNA-binding regions lie at residues 205-212 (NSIRHNLS) and 228-231 (SSWW). S206 is subject to Phosphoserine; by STK4/MST1. Phosphoserine is present on residues S212, S228, and S229. A disordered region spans residues 228-339 (SSWWMLNPEG…DDLGDGDVHS (112 aa)). 2 positions are modified to N6-acetyllysine: K239 and K242. S243 bears the Phosphoserine; by CDK1 mark. Residues R245 and R247 each carry the omega-N-methylarginine; by PRMT1 modification. The Nuclear localization signal motif lies at 245–247 (RRR). S250 carries the post-translational modification Phosphoserine; by PKB/AKT1 and SGK1. N6-acetyllysine occurs at positions 256, 259, and 268. The segment covering 258-269 (AKSRGRAAKKKA) has biased composition (basic residues). The interval 277-557 (GPGDSPGSQF…RLTPVKTPLQ (281 aa)) is sufficient for interaction with NLK. Residues S281 and S292 each carry the phosphoserine modification. The span at 303–320 (NWSTFRPRTSSNASTISG) shows a compositional bias: polar residues. A Phosphoserine; by PKB/AKT1 modification is found at S313. Position 316 is a phosphoserine; by CK1 and SGK1 (S316). Residue S319 is modified to Phosphoserine; by CK1. S323 carries the post-translational modification Phosphoserine. T327 is modified (phosphothreonine). The interval 357–453 (SEISNPENME…GGLNQYNCAP (97 aa)) is required for interaction with RUNX2. K417 is subject to N6-acetyllysine. A Required for interaction with SIRT1 motif is present at residues 456–460 (LKELL).

As to quaternary structure, interacts with LRPPRC. Interacts with RUNX2; the interaction inhibits RUNX2 transcriptional activity and mediates the IGF1/insulin-dependent BGLAP expression in osteoblasts Interacts with PPP2R1A; the interaction regulates the dephosphorylation of FOXO1 at Thr-24 and Ser-250 leading to its nuclear import. Interacts with NLK. Interacts with SIRT1; the interaction results in the deacetylation of FOXO1 leading to activation of FOXO1-mediated transcription of genes involved in DNA repair and stress resistance. Binds to CDK1. Interacts with the 14-3-3 proteins, YWHAG and YWHAZ; the interactions require insulin-stimulated phosphorylation on Thr-24, promote nuclear exit and loss of transcriptional activity. Interacts with SKP2; the interaction ubiquitinates FOXO1 leading to its proteasomal degradation. The interaction requires the presence of KRIT1. Interacts (via the C-terminal half) with ATF4 (via its DNA binding domain); the interaction occurs in osteoblasts, regulates glucose homeostasis via suppression of beta-cell proliferation and subsequent decrease in insulin production. Interacts with PRMT1; the interaction methylates FOXO1, prevents PKB/AKT1 phosphorylation and retains FOXO1 in the nucleus. Interacts with EP300 and CREBBP; the interactions acetylate FOXO1. Interacts with SIRT2; the interaction is disrupted in response to oxidative stress or serum deprivation, leading to increased level of acetylated FOXO1, which promotes stress-induced autophagy by stimulating E1-like activating enzyme ATG7. Interacts (acetylated form) with ATG7; the interaction is increased in response to oxidative stress or serum deprivation and promotes the autophagic process leading to cell death. Interacts (acetylated form) with PPARG. Interacts with XBP1; this interaction is direct and leads to FOXO1 ubiquitination and degradation via the proteasome pathway. Interacts (via the Fork-head domain) with CEBPA; the interaction increases when FOXO1 is deacetylated. Interacts with WDFY2. Forms a complex with WDFY2 and AKT1. Interacts with CRY1. Interacts with PPIA/CYPA; the interaction promotes FOXO1 dephosphorylation, nuclear accumulation and transcriptional activity. Interacts with TOX4; FOXO1 is required for full induction of TOX4-dependent activity and the interaction is inhibited by insulin. Interacts (when phosphorylated on Ser-250) with STUB1/CHIP. Post-translationally, phosphorylation by NLK promotes nuclear export and inhibits the transcriptional activity. In response to growth factors, phosphorylation on Thr-24, Ser-250 and Ser-313 by PKB/AKT1 promotes nuclear export and inactivation of transactivational activity. Phosphorylation on Thr-24 is required for binding 14-3-3 proteins. Phosphorylation of Ser-250 decreases DNA-binding activity and promotes the phosphorylation of Thr-24 and Ser-313, permitting phosphorylation of Ser-316 and Ser-319, probably by CDK1, leading to nuclear exclusion and loss of function. Stress signals, such as response to oxygen or nitric oxide, attenuate the PKB/AKT1-mediated phosphorylation leading to nuclear retention. Phosphorylation of Ser-323 is independent of IGF1 and leads to reduced function. Dephosphorylated on Thr-24 and Ser-250 by PP2A in beta-cells under oxidative stress leading to nuclear retention. Phosphorylation of Ser-243 by CDK1 disrupts binding of 14-3-3 proteins leading to nuclear accumulation and has no effect on DNA binding nor transcriptional activity. Phosphorylation by STK4/MST1 on Ser-206, upon oxidative stress, inhibits binding to 14-3-3 proteins and nuclear export. PPIA/CYPA promotes its dephosphorylation on Ser-250. In terms of processing, ubiquitinated by SKP2. Ubiquitination leads to proteasomal degradation. Ubiquitinated by STUB1/CHIP; when Ser-250 is phosphorylated. Methylation inhibits AKT1-mediated phosphorylation at Ser-250 and is increased by oxidative stress. Post-translationally, acetylated. Acetylation at Lys-256 and Lys-268 are necessary for autophagic cell death induction. Deacetylated by SIRT2 in response to oxidative stress or serum deprivation, thereby negatively regulating FOXO1-mediated autophagic cell death. Once in the nucleus, acetylated by CREBBP/EP300. Acetylation diminishes the interaction with target DNA and attenuates the transcriptional activity. It increases the phosphorylation at Ser-250. Deacetylation by SIRT1 results in reactivation of the transcriptional activity. Oxidative stress by hydrogen peroxide treatment appears to promote deacetylation and uncoupling of insulin-induced phosphorylation. By contrast, resveratrol acts independently of acetylation. Acetylated at Lys-417, promoting its localization to the nucleus and transcription factor activity. Deacetylation at Lys-417 by SIRT6, promotes its translocation into the cytoplasm, preventing its transcription factor activity. Deacetylation and subsequent inhibition by SIRT6 has different effects depending on cell types: it inhibits gluconeogenesis in hepatocytes, promotes glucose sensing in pancreatic beta-cells and regulates lipid catabolism in brown adipocytes. In terms of tissue distribution, expressed in the internal elastic lamina of the carotid artery (at protein level).

It is found in the cytoplasm. It localises to the nucleus. Transcription factor that is the main target of insulin signaling and regulates metabolic homeostasis in response to oxidative stress. Binds to the insulin response element (IRE) with consensus sequence 5'-TT[G/A]TTTTG-3' and the related Daf-16 family binding element (DBE) with consensus sequence 5'-TT[G/A]TTTAC-3'. Activity suppressed by insulin. Main regulator of redox balance and osteoblast numbers and controls bone mass. Orchestrates the endocrine function of the skeleton in regulating glucose metabolism. Also acts as a key regulator of chondrogenic commitment of skeletal progenitor cells in response to lipid availability: when lipids levels are low, translocates to the nucleus and promotes expression of SOX9, which induces chondrogenic commitment and suppresses fatty acid oxidation. Acts synergistically with ATF4 to suppress osteocalcin/BGLAP activity, increasing glucose levels and triggering glucose intolerance and insulin insensitivity. Also suppresses the transcriptional activity of RUNX2, an upstream activator of osteocalcin/BGLAP. Acts as an inhibitor of glucose sensing in pancreatic beta cells by acting as a transcription repressor and suppressing expression of PDX1. In hepatocytes, promotes gluconeogenesis by acting together with PPARGC1A and CEBPA to activate the expression of genes such as IGFBP1, G6PC1 and PCK1. Also promotes gluconeogenesis by directly promoting expression of PPARGC1A and G6PC1. Important regulator of cell death acting downstream of CDK1, PKB/AKT1 and STK4/MST1. Promotes neural cell death. Mediates insulin action on adipose tissue. Regulates the expression of adipogenic genes such as PPARG during preadipocyte differentiation and, adipocyte size and adipose tissue-specific gene expression in response to excessive calorie intake. Regulates the transcriptional activity of GADD45A and repair of nitric oxide-damaged DNA in beta-cells. Required for the autophagic cell death induction in response to starvation or oxidative stress in a transcription-independent manner. Mediates the function of MLIP in cardiomyocytes hypertrophy and cardiac remodeling. Positive regulator of apoptosis in cardiac smooth muscle cells as a result of its transcriptional activation of pro-apoptotic genes. Regulates endothelial cell (EC) viability and apoptosis in a PPIA/CYPA-dependent manner via transcription of CCL2 and BCL2L11 which are involved in EC chemotaxis and apoptosis. In Rattus norvegicus (Rat), this protein is Forkhead box protein O1 (Foxo1).